The sequence spans 120 residues: Holo-[acyl-carrier-protein] synthase (120 aa).

2 residues coordinate Mg(2+): Asp-8 and Glu-58.

It belongs to the P-Pant transferase superfamily. AcpS family. Mg(2+) is required as a cofactor.

It is found in the cytoplasm. It carries out the reaction apo-[ACP] + CoA = holo-[ACP] + adenosine 3',5'-bisphosphate + H(+). Its function is as follows. Transfers the 4'-phosphopantetheine moiety from coenzyme A to a Ser of acyl-carrier-protein. This chain is Holo-[acyl-carrier-protein] synthase, found in Streptococcus sanguinis (strain SK36).